The sequence spans 272 residues: Ribosomal RNA small subunit methyltransferase A (272 aa).

6 residues coordinate S-adenosyl-L-methionine: N18, L20, G45, E66, D91, and N113.

The protein belongs to the class I-like SAM-binding methyltransferase superfamily. rRNA adenine N(6)-methyltransferase family. RsmA subfamily.

It is found in the cytoplasm. It catalyses the reaction adenosine(1518)/adenosine(1519) in 16S rRNA + 4 S-adenosyl-L-methionine = N(6)-dimethyladenosine(1518)/N(6)-dimethyladenosine(1519) in 16S rRNA + 4 S-adenosyl-L-homocysteine + 4 H(+). Functionally, specifically dimethylates two adjacent adenosines (A1518 and A1519) in the loop of a conserved hairpin near the 3'-end of 16S rRNA in the 30S particle. May play a critical role in biogenesis of 30S subunits. This is Ribosomal RNA small subunit methyltransferase A from Yersinia enterocolitica serotype O:8 / biotype 1B (strain NCTC 13174 / 8081).